We begin with the raw amino-acid sequence, 197 residues long: Phosphoheptose isomerase (197 aa).

An SIS domain is found at Met34–Pro192. Substrate is bound by residues Asn49 to Gly51, Gln62, Asn91 to Asp92, Ser122, and His172. Zn(2+) is bound at residue Gln62. 2 residues coordinate Zn(2+): His172 and His180.

Belongs to the SIS family. GmhA subfamily. In terms of assembly, homotetramer. Zn(2+) serves as cofactor.

Its subcellular location is the cytoplasm. It catalyses the reaction 2 D-sedoheptulose 7-phosphate = D-glycero-alpha-D-manno-heptose 7-phosphate + D-glycero-beta-D-manno-heptose 7-phosphate. It functions in the pathway carbohydrate biosynthesis; D-glycero-D-manno-heptose 7-phosphate biosynthesis; D-glycero-alpha-D-manno-heptose 7-phosphate and D-glycero-beta-D-manno-heptose 7-phosphate from sedoheptulose 7-phosphate: step 1/1. Its function is as follows. Catalyzes the isomerization of sedoheptulose 7-phosphate in D-glycero-D-manno-heptose 7-phosphate. The chain is Phosphoheptose isomerase from Pseudoalteromonas atlantica (strain T6c / ATCC BAA-1087).